The primary structure comprises 265 residues: Imidazole glycerol phosphate synthase subunit HisF (265 aa).

Catalysis depends on residues aspartate 17 and aspartate 136.

Belongs to the HisA/HisF family. In terms of assembly, heterodimer of HisH and HisF.

It is found in the cytoplasm. It catalyses the reaction 5-[(5-phospho-1-deoxy-D-ribulos-1-ylimino)methylamino]-1-(5-phospho-beta-D-ribosyl)imidazole-4-carboxamide + L-glutamine = D-erythro-1-(imidazol-4-yl)glycerol 3-phosphate + 5-amino-1-(5-phospho-beta-D-ribosyl)imidazole-4-carboxamide + L-glutamate + H(+). It functions in the pathway amino-acid biosynthesis; L-histidine biosynthesis; L-histidine from 5-phospho-alpha-D-ribose 1-diphosphate: step 5/9. IGPS catalyzes the conversion of PRFAR and glutamine to IGP, AICAR and glutamate. The HisF subunit catalyzes the cyclization activity that produces IGP and AICAR from PRFAR using the ammonia provided by the HisH subunit. This chain is Imidazole glycerol phosphate synthase subunit HisF, found in Mycolicibacterium paratuberculosis (strain ATCC BAA-968 / K-10) (Mycobacterium paratuberculosis).